A 219-amino-acid polypeptide reads, in one-letter code: Thiamine-phosphate synthase (219 aa).

4-amino-2-methyl-5-(diphosphooxymethyl)pyrimidine contacts are provided by residues 48–52 and asparagine 80; that span reads QLREK. Aspartate 81 and aspartate 100 together coordinate Mg(2+). Position 119 (serine 119) interacts with 4-amino-2-methyl-5-(diphosphooxymethyl)pyrimidine. Position 145 to 147 (145 to 147) interacts with 2-[(2R,5Z)-2-carboxy-4-methylthiazol-5(2H)-ylidene]ethyl phosphate; the sequence is TPT. Residue lysine 148 coordinates 4-amino-2-methyl-5-(diphosphooxymethyl)pyrimidine. 2-[(2R,5Z)-2-carboxy-4-methylthiazol-5(2H)-ylidene]ethyl phosphate is bound by residues glycine 176 and 196–197; that span reads VS.

Belongs to the thiamine-phosphate synthase family. Mg(2+) serves as cofactor.

It carries out the reaction 2-[(2R,5Z)-2-carboxy-4-methylthiazol-5(2H)-ylidene]ethyl phosphate + 4-amino-2-methyl-5-(diphosphooxymethyl)pyrimidine + 2 H(+) = thiamine phosphate + CO2 + diphosphate. The enzyme catalyses 2-(2-carboxy-4-methylthiazol-5-yl)ethyl phosphate + 4-amino-2-methyl-5-(diphosphooxymethyl)pyrimidine + 2 H(+) = thiamine phosphate + CO2 + diphosphate. It catalyses the reaction 4-methyl-5-(2-phosphooxyethyl)-thiazole + 4-amino-2-methyl-5-(diphosphooxymethyl)pyrimidine + H(+) = thiamine phosphate + diphosphate. It participates in cofactor biosynthesis; thiamine diphosphate biosynthesis; thiamine phosphate from 4-amino-2-methyl-5-diphosphomethylpyrimidine and 4-methyl-5-(2-phosphoethyl)-thiazole: step 1/1. Its function is as follows. Condenses 4-methyl-5-(beta-hydroxyethyl)thiazole monophosphate (THZ-P) and 2-methyl-4-amino-5-hydroxymethyl pyrimidine pyrophosphate (HMP-PP) to form thiamine monophosphate (TMP). This is Thiamine-phosphate synthase from Albidiferax ferrireducens (strain ATCC BAA-621 / DSM 15236 / T118) (Rhodoferax ferrireducens).